A 525-amino-acid polypeptide reads, in one-letter code: GMP synthase [glutamine-hydrolyzing] (525 aa).

In terms of domain architecture, Glutamine amidotransferase type-1 spans 16–205 (PVLVVDFGAQ…LHDFAGLGAQ (190 aa)). Cys-93 (nucleophile) is an active-site residue. Catalysis depends on residues His-179 and Glu-181. The region spanning 206-399 (WTPANIANAL…LGLPEEIVAR (194 aa)) is the GMPS ATP-PPase domain. Position 233–239 (233–239 (SGGVDSA)) interacts with ATP.

As to quaternary structure, homodimer.

The catalysed reaction is XMP + L-glutamine + ATP + H2O = GMP + L-glutamate + AMP + diphosphate + 2 H(+). Its pathway is purine metabolism; GMP biosynthesis; GMP from XMP (L-Gln route): step 1/1. In terms of biological role, catalyzes the synthesis of GMP from XMP. This is GMP synthase [glutamine-hydrolyzing] from Mycobacterium bovis (strain BCG / Pasteur 1173P2).